The primary structure comprises 336 residues: Oxaloacetate decarboxylase (336 aa).

The Pyruvate carboxyltransferase domain maps to 10-258 (PIVLDTTVRD…LAAVDLDRIF (249 aa)). Residues D19, H197, and H199 each contribute to the Mn(2+) site.

The protein belongs to the 4-hydroxy-2-oxovalerate aldolase family. Homodimer. A divalent metal cation serves as cofactor.

The enzyme catalyses oxaloacetate + H(+) = pyruvate + CO2. With respect to regulation, activity is abolished upon incubation with Chelex and EDTA. Exhibits oxaloacetate decarboxylase activity. Lacks any detectable aldolase activity with 4-hydroxy-2-oxopentanoate (HOPA), 4-hydroxy-2-oxohexanoate (HOHA) or other 4-hydroxy-2-oxoacids. This chain is Oxaloacetate decarboxylase, found in Mycobacterium tuberculosis (strain ATCC 25618 / H37Rv).